A 562-amino-acid polypeptide reads, in one-letter code: Protein wntless (562 aa).

The Cytoplasmic portion of the chain corresponds to 1–13; it reads MSGTILENLSGRK. Residues 14–34 traverse the membrane as a helical segment; sequence LSILVSSLLLCQVACFLIGGL. The Lumenal portion of the chain corresponds to 35 to 239; that stretch reads YAPVPAGHQI…AIHQNGGFTQ (205 aa). Residues Asn-58 and Asn-103 are each glycosylated (N-linked (GlcNAc...) asparagine). Residues 240–260 form a helical membrane-spanning segment; it reads VWLLLKSVLFPFIIGIMVWFW. Topologically, residues 261-270 are cytoplasmic; it reads RRVHILQRSP. The helical transmembrane segment at 271–291 threads the bilayer; the sequence is ALLEYMLLYLGGALSFLNLPL. Residues 292–311 are Lumenal-facing; that stretch reads EYLTLSFEMPYMLLLSDVRQ. A helical transmembrane segment spans residues 312-332; that stretch reads GIFYAMLLSFWLVFAGEHMLI. At 333–344 the chain is on the cytoplasmic side; it reads QDSPNKSTIRSR. The chain crosses the membrane as a helical span at residues 345-365; sequence YWKHLSAVVVGCISLFVFDIC. Residues 366-390 are Lumenal-facing; sequence ERGMQLRNPFYSIWTTPLGAKVAMS. A helical membrane pass occupies residues 391–411; that stretch reads FIVLAGVSAGIYFLFLCYMVW. The Cytoplasmic segment spans residues 412-441; sequence KVFKDIGDKRTSLPSMSQARRLHYEGLIYR. A helical membrane pass occupies residues 442–462; it reads FKFLMLATLLCAGLTVAGFIM. The Lumenal segment spans residues 463–482; sequence GQMAEGHWKWNEDIEIQLTS. A helical membrane pass occupies residues 483-503; the sequence is AFLTGVYGMWNIYIFALLILY. Residues 504 to 562 are Cytoplasmic-facing; the sequence is APSHKQWPTMRHSDETTQSNENIVASAASEEIEFSNLPSDSNPSEISSLTSFTRKVAFD. Positions 538–562 are disordered; sequence SNLPSDSNPSEISSLTSFTRKVAFD. The span at 539–556 shows a compositional bias: polar residues; that stretch reads NLPSDSNPSEISSLTSFT.

It belongs to the wntless family. As to quaternary structure, interacts with wg; in the Golgi. Interacts with Vps35, a component of the retromer complex; wls stability is regulated by Vps35.

The protein resides in the presynaptic cell membrane. Its subcellular location is the postsynaptic cell membrane. It localises to the cell membrane. The protein localises to the endoplasmic reticulum membrane. It is found in the endosome membrane. The protein resides in the golgi apparatus membrane. In terms of biological role, a segment polarity gene required for wingless (wg)-dependent patterning processes, acting in both wg-sending cells and wg-target cells. In non-neuronal cells wls directs wg secretion. The wls traffic loop encompasses the Golgi, the cell surface, an endocytic compartment and a retrograde route leading back to the Golgi, and involves clathrin-mediated endocytosis and the retromer complex (a conserved protein complex consisting of Vps35 and Vps26). In neuronal cells (the larval motorneuron NMJ), the wg signal moves across the synapse via the release of wls-containing exosome-like vesicles. Postsynaptic wls is required for the trafficking of fz2 through the fz2-interacting protein Grip. This is Protein wntless from Drosophila mojavensis (Fruit fly).